A 128-amino-acid polypeptide reads, in one-letter code: Insulin-like growth factor 2 (128 aa).

Residues 1–24 form the signal peptide; the sequence is MGISMGKSMLVLLTFLAFASCCIA. The tract at residues 25-52 is b; it reads AYRPSETLCGGELVDTLQFVCGDRGFYF. Intrachain disulfides connect cysteine 33/cysteine 71, cysteine 45/cysteine 84, and cysteine 70/cysteine 75. Residues 53-64 are c; sequence SRPASRVSRRSR. The interval 65–85 is a; it reads GIVEECCFRSCDLALLETYCA. The d stretch occupies residues 86-91; it reads TPAKSE. The propeptide at 92 to 128 is e peptide; it reads RDVSASLAVLPDNFPRYPVGKFFQYDTWRQSTQRLRR.

Belongs to the insulin family. As to quaternary structure, interacts with MYORG; this interaction is required for IGF2 secretion. Interacts with integrins ITGAV:ITGB3 and ITGA6:ITGB4; integrin-binding is required for IGF2 signaling. In terms of processing, proteolytically processed by PCSK4, proIGF2 is cleaved at Arg-128 and Arg-92 to generate big-IGF2 and mature IGF2.

The protein localises to the secreted. Functionally, the insulin-like growth factors possess growth-promoting activity. Major fetal growth hormone in mammals. Plays a key role in regulating fetoplacental development. IGF2 is influenced by placental lactogen. Also involved in tissue differentiation. In adults, involved in glucose metabolism in adipose tissue, skeletal muscle and liver. Acts as a ligand for integrin which is required for IGF2 signaling. Positively regulates myogenic transcription factor MYOD1 function by facilitating the recruitment of transcriptional coactivators, thereby controlling muscle terminal differentiation. Inhibits myoblast differentiation and metabolism via increasing the mitochondrial respiration rate. Its function is as follows. Preptin undergoes glucose-mediated co-secretion with insulin, and acts as a physiological amplifier of glucose-mediated insulin secretion. Exhibits osteogenic properties by increasing osteoblast mitogenic activity through phosphoactivation of MAPK1 and MAPK3. This is Insulin-like growth factor 2 from Cavia porcellus (Guinea pig).